Reading from the N-terminus, the 469-residue chain is uncharacterized protein (469 aa).

The next 3 membrane-spanning stretches (helical) occupy residues 42-62, 179-199, and 249-269; these read DVII…AYVI, IVLP…VTPS, and NLKY…GLFV.

The protein localises to the cell membrane. This is an uncharacterized protein from Methanocaldococcus jannaschii (strain ATCC 43067 / DSM 2661 / JAL-1 / JCM 10045 / NBRC 100440) (Methanococcus jannaschii).